The sequence spans 139 residues: HTH-type transcriptional repressor Mb2911 (139 aa).

The 133-residue stretch at D6–S138 folds into the HTH marR-type domain.

In terms of assembly, homodimer.

In terms of biological role, represses expression of the HQNO methyltransferase htm gene by binding to its promoter region. This chain is HTH-type transcriptional repressor Mb2911, found in Mycobacterium bovis (strain ATCC BAA-935 / AF2122/97).